The following is a 362-amino-acid chain: tRNA/tmRNA (uracil-C(5))-methyltransferase (362 aa).

S-adenosyl-L-methionine-binding residues include Gln182, Tyr210, Asn215, Glu231, and Asp293. Cys318 (nucleophile) is an active-site residue. The active-site Proton acceptor is the Glu352.

Belongs to the class I-like SAM-binding methyltransferase superfamily. RNA M5U methyltransferase family. TrmA subfamily.

It catalyses the reaction uridine(54) in tRNA + S-adenosyl-L-methionine = 5-methyluridine(54) in tRNA + S-adenosyl-L-homocysteine + H(+). The enzyme catalyses uridine(341) in tmRNA + S-adenosyl-L-methionine = 5-methyluridine(341) in tmRNA + S-adenosyl-L-homocysteine + H(+). In terms of biological role, dual-specificity methyltransferase that catalyzes the formation of 5-methyluridine at position 54 (m5U54) in all tRNAs, and that of position 341 (m5U341) in tmRNA (transfer-mRNA). The protein is tRNA/tmRNA (uracil-C(5))-methyltransferase of Neisseria meningitidis serogroup A / serotype 4A (strain DSM 15465 / Z2491).